The following is a 286-amino-acid chain: Putative type II secretion system L-type protein YghE (286 aa).

The helical transmembrane segment at 136–156 threads the bilayer; the sequence is VMILPILLILVALAVERGVTL.

This sequence belongs to the GSP L family.

It localises to the cell inner membrane. Functionally, involved in a type II secretion system (T2SS, formerly general secretion pathway, GSP) for the export of folded proteins across the outer membrane. The protein is Putative type II secretion system L-type protein YghE of Escherichia coli (strain K12).